The following is a 283-amino-acid chain: ATP synthase gamma chain (283 aa).

This sequence belongs to the ATPase gamma chain family. In terms of assembly, F-type ATPases have 2 components, CF(1) - the catalytic core - and CF(0) - the membrane proton channel. CF(1) has five subunits: alpha(3), beta(3), gamma(1), delta(1), epsilon(1). CF(0) has three main subunits: a, b and c.

It localises to the cell inner membrane. Its function is as follows. Produces ATP from ADP in the presence of a proton gradient across the membrane. The gamma chain is believed to be important in regulating ATPase activity and the flow of protons through the CF(0) complex. The protein is ATP synthase gamma chain of Ehrlichia ruminantium (strain Gardel).